Reading from the N-terminus, the 379-residue chain is UDP-N-acetylglucosamine--N-acetylmuramyl-(pentapeptide) pyrophosphoryl-undecaprenol N-acetylglucosamine transferase (379 aa).

UDP-N-acetyl-alpha-D-glucosamine is bound by residues 19–21 (TGG), Asn133, Arg174, Ser207, Ile261, and Gln306.

The protein belongs to the glycosyltransferase 28 family. MurG subfamily.

It localises to the cell inner membrane. The catalysed reaction is di-trans,octa-cis-undecaprenyl diphospho-N-acetyl-alpha-D-muramoyl-L-alanyl-D-glutamyl-meso-2,6-diaminopimeloyl-D-alanyl-D-alanine + UDP-N-acetyl-alpha-D-glucosamine = di-trans,octa-cis-undecaprenyl diphospho-[N-acetyl-alpha-D-glucosaminyl-(1-&gt;4)]-N-acetyl-alpha-D-muramoyl-L-alanyl-D-glutamyl-meso-2,6-diaminopimeloyl-D-alanyl-D-alanine + UDP + H(+). It participates in cell wall biogenesis; peptidoglycan biosynthesis. Its function is as follows. Cell wall formation. Catalyzes the transfer of a GlcNAc subunit on undecaprenyl-pyrophosphoryl-MurNAc-pentapeptide (lipid intermediate I) to form undecaprenyl-pyrophosphoryl-MurNAc-(pentapeptide)GlcNAc (lipid intermediate II). This Porphyromonas gingivalis (strain ATCC BAA-308 / W83) protein is UDP-N-acetylglucosamine--N-acetylmuramyl-(pentapeptide) pyrophosphoryl-undecaprenol N-acetylglucosamine transferase.